The following is a 296-amino-acid chain: MKRNLKAIPVLVAGLFTSQLSIAAGSVSADPHAGHDMSAMQMPADENFTEMTSMEPIVTESRTPIPPVTDADRKAAFGNLQGHAIHDSAINYLVLLDQLEWQRSDNTNNFSWSVNSWIGGDTDRIWLKSEGERSNGETEAAEAQLLWGHAVGPWWDLVAGVRQDFRPASARTWAAVGFQGLALYNFESEITGFVSNGGKAALRLGGEYDVLLTNRLILQPSYEVNFYSQDDESRGRGRGLTDTELGLRLRYEIRREFAPYIGVSWNQLYGKTSDMAKREGEKDHQVVFLAGARIWF.

The signal sequence occupies residues 1 to 23 (MKRNLKAIPVLVAGLFTSQLSIA).

It localises to the cell outer membrane. Its function is as follows. Required for the copper-inducible expression of copper resistance. This chain is Copper resistance protein B (pcoB), found in Escherichia coli.